A 514-amino-acid polypeptide reads, in one-letter code: Multifunctional alkaline phosphatase superfamily protein PehA (514 aa).

Asp-12, Cys-57, Asp-324, and His-325 together coordinate Mn(2+). Catalysis depends on Cys-57, which acts as the Nucleophile. Cys-57 is subject to 3-oxoalanine (Cys).

Belongs to the alkaline phosphatase superfamily. As to quaternary structure, homotetramer. Mn(2+) is required as a cofactor. Post-translationally, the conversion to 3-oxoalanine (also known as C-formylglycine, FGly), of a serine or cysteine residue in prokaryotes and of a cysteine residue in eukaryotes, is critical for catalytic activity. Phosphate triester hydrolytic activity is retained with unmodified cysteine acting as a nucleophile.

Its activity is regulated as follows. Anions including Cl(-) and CH3COO(-), and SO4(2-) salts stimulate activity 20-40% at 100 mM. Hydrolytic enzyme with a broad substrate specificity acting on phosphate diesters and phosphonate monoesters. Hydrolyzes phosphate mono- and triesters, sulfate monoesters and sulfonate monoesters. Hydrolyzes glyphosate monoesters. Does not hydrolyze DNA or cGMP. Hydrolyzes glyceryl glyphosate, but this substrate has a much lower affinity than the glyphosate monoesters. The sequence is that of Multifunctional alkaline phosphatase superfamily protein PehA from Trinickia caryophylli (Paraburkholderia caryophylli).